Here is a 204-residue protein sequence, read N- to C-terminus: Ribosomal RNA small subunit methyltransferase G (204 aa).

Residues G76, L81, 127–128 (IE), and R140 each bind S-adenosyl-L-methionine.

It belongs to the methyltransferase superfamily. RNA methyltransferase RsmG family.

The protein localises to the cytoplasm. The enzyme catalyses guanosine(527) in 16S rRNA + S-adenosyl-L-methionine = N(7)-methylguanosine(527) in 16S rRNA + S-adenosyl-L-homocysteine. Functionally, specifically methylates the N7 position of guanine in position 527 of 16S rRNA. This is Ribosomal RNA small subunit methyltransferase G from Francisella philomiragia subsp. philomiragia (strain ATCC 25017 / CCUG 19701 / FSC 153 / O#319-036).